We begin with the raw amino-acid sequence, 79 residues long: Large ribosomal subunit protein uL22 (79 aa).

The protein belongs to the universal ribosomal protein uL22 family. In terms of assembly, part of the 50S ribosomal subunit.

This protein binds specifically to 23S rRNA; its binding is stimulated by other ribosomal proteins, e.g. L4, L17, and L20. It is important during the early stages of 50S assembly. It makes multiple contacts with different domains of the 23S rRNA in the assembled 50S subunit and ribosome. Its function is as follows. The globular domain of the protein is located near the polypeptide exit tunnel on the outside of the subunit, while an extended beta-hairpin is found that lines the wall of the exit tunnel in the center of the 70S ribosome. This Prunus armeniaca phytoplasma protein is Large ribosomal subunit protein uL22 (rplV).